The chain runs to 255 residues: Proteasome subunit alpha (255 aa).

Residues 224-255 are disordered; that stretch reads RLEELLGERGPAQHAPEEPADPEPEPPIAPPG.

It belongs to the peptidase T1A family. In terms of assembly, the 20S proteasome core is composed of 14 alpha and 14 beta subunits that assemble into four stacked heptameric rings, resulting in a barrel-shaped structure. The two inner rings, each composed of seven catalytic beta subunits, are sandwiched by two outer rings, each composed of seven alpha subunits. The catalytic chamber with the active sites is on the inside of the barrel. Has a gated structure, the ends of the cylinder being occluded by the N-termini of the alpha-subunits. Is capped by the proteasome-associated ATPase, ARC.

Its subcellular location is the cytoplasm. The protein operates within protein degradation; proteasomal Pup-dependent pathway. The formation of the proteasomal ATPase ARC-20S proteasome complex, likely via the docking of the C-termini of ARC into the intersubunit pockets in the alpha-rings, may trigger opening of the gate for substrate entry. Interconversion between the open-gate and close-gate conformations leads to a dynamic regulation of the 20S proteasome proteolysis activity. Functionally, component of the proteasome core, a large protease complex with broad specificity involved in protein degradation. In Nocardioides sp. (strain ATCC BAA-499 / JS614), this protein is Proteasome subunit alpha.